Consider the following 607-residue polypeptide: Elongation factor 4 (607 aa).

The region spanning 11–193 (EKIRNFSIIA…QIVEKVPAPQ (183 aa)) is the tr-type G domain. Residues 23–28 (DHGKST) and 140–143 (NKID) contribute to the GTP site.

The protein belongs to the TRAFAC class translation factor GTPase superfamily. Classic translation factor GTPase family. LepA subfamily.

The protein resides in the cell membrane. It catalyses the reaction GTP + H2O = GDP + phosphate + H(+). Required for accurate and efficient protein synthesis under certain stress conditions. May act as a fidelity factor of the translation reaction, by catalyzing a one-codon backward translocation of tRNAs on improperly translocated ribosomes. Back-translocation proceeds from a post-translocation (POST) complex to a pre-translocation (PRE) complex, thus giving elongation factor G a second chance to translocate the tRNAs correctly. Binds to ribosomes in a GTP-dependent manner. The protein is Elongation factor 4 of Lactococcus lactis subsp. cremoris (strain SK11).